A 161-amino-acid chain; its full sequence is 3-isopropylmalate dehydratase small subunit (161 aa).

The protein belongs to the LeuD family. LeuD type 2 subfamily. As to quaternary structure, heterodimer of LeuC and LeuD.

The catalysed reaction is (2R,3S)-3-isopropylmalate = (2S)-2-isopropylmalate. The protein operates within amino-acid biosynthesis; L-leucine biosynthesis; L-leucine from 3-methyl-2-oxobutanoate: step 2/4. Functionally, catalyzes the isomerization between 2-isopropylmalate and 3-isopropylmalate, via the formation of 2-isopropylmaleate. The protein is 3-isopropylmalate dehydratase small subunit of Pyrobaculum islandicum (strain DSM 4184 / JCM 9189 / GEO3).